Consider the following 329-residue polypeptide: NAC domain-containing protein 79 (329 aa).

The region spanning 17-167 (LPPGFRFHPT…EWVICRVFHK (151 aa)) is the NAC domain. A DNA-binding region spans residues 114-173 (VGMKKTLVFYRGRAPKGQKTNWVMHEYRLDGKLSAHNLPKTAKNEWVICRVFHKTAGGKK).

As to expression, expressed at low levels in leaves.

The protein localises to the nucleus. The sequence is that of NAC domain-containing protein 79 from Arabidopsis thaliana (Mouse-ear cress).